The sequence spans 235 residues: 15,16-dihydrobiliverdin:ferredoxin oxidoreductase (235 aa).

It belongs to the HY2 family.

It catalyses the reaction 15,16-dihydrobiliverdin + oxidized 2[4Fe-4S]-[ferredoxin] = biliverdin IXalpha + reduced 2[4Fe-4S]-[ferredoxin] + 2 H(+). In terms of biological role, catalyzes the two-electron reduction of biliverdin IX-alpha at the C15 methine bridge. The polypeptide is 15,16-dihydrobiliverdin:ferredoxin oxidoreductase (Synechococcus sp. (strain CC9605)).